The chain runs to 605 residues: ABC transporter E family member 2 (605 aa).

The 4Fe-4S ferredoxin-type domain maps to 46-75; that stretch reads KLAFISEELCIGCGICVKKCPFEAIQIINL. 2 ABC transporter domains span residues 70-315 and 344-568; these read IQII…FLAG and IQSY…LSHL. ATP-binding positions include 110 to 117 and 381 to 388; these read GTNGIGKS and GENGTGKT.

Belongs to the ABC transporter superfamily. ABCE family. In terms of tissue distribution, expressed in roots, stems, leaves, flowers and siliques.

The protein resides in the membrane. The sequence is that of ABC transporter E family member 2 (ABCE2) from Arabidopsis thaliana (Mouse-ear cress).